A 133-amino-acid chain; its full sequence is Ribosome-binding factor A (133 aa).

The protein belongs to the RbfA family. As to quaternary structure, monomer. Binds 30S ribosomal subunits, but not 50S ribosomal subunits or 70S ribosomes.

The protein localises to the cytoplasm. In terms of biological role, one of several proteins that assist in the late maturation steps of the functional core of the 30S ribosomal subunit. Associates with free 30S ribosomal subunits (but not with 30S subunits that are part of 70S ribosomes or polysomes). Required for efficient processing of 16S rRNA. May interact with the 5'-terminal helix region of 16S rRNA. This is Ribosome-binding factor A from Yersinia enterocolitica.